Consider the following 117-residue polypeptide: LIM and senescent cell antigen-like-containing domain protein 3 (117 aa).

Residues 70-117 (ATCERCKGGFAPAETIVNSNGELYHEQCFVCAQCFQQFPEGLFYEERT) form the LIM zinc-binding domain.

Detected in testis.

The protein localises to the cytoplasm. In Homo sapiens (Human), this protein is LIM and senescent cell antigen-like-containing domain protein 3 (LIMS3).